The sequence spans 1507 residues: Histone-lysine N-methyltransferase set-2 (1507 aa).

The tract at residues 1-32 (MSTHDMNHHPPRKSHSKRDKPSSSNSGPKIEN) is disordered. A compositionally biased stretch (basic residues) spans 9–18 (HPPRKSHSKR). The RRM domain occupies 128 to 199 (VSLFNMDDNC…QNLLATKCTP (72 aa)). 5 disordered regions span residues 280–578 (DYTM…QPQM), 650–697 (EPFS…EEPA), 803–826 (DEEK…SNHL), 842–1058 (SSRG…GPII), and 1163–1199 (QKPR…FKPR). The segment covering 296–315 (PIPPPPIKEESPPPPPPPPV) has biased composition (pro residues). A compositionally biased stretch (low complexity) spans 316–327 (ASVSNLAPVPSV). Over residues 331–342 (YYNNIQPSSSTM) the composition is skewed to polar residues. A compositionally biased stretch (basic and acidic residues) spans 413-444 (VKYETYKMEKRKIKYEGGNKKYEQVHIKERTA). The segment covering 456–465 (SSESASGSSS) has biased composition (low complexity). Positions 478-488 (KKKKRPKSPNR) are enriched in basic residues. Residues 566 to 575 (HLQTPYQHVQ) show a composition bias toward polar residues. 2 stretches are compositionally biased toward basic and acidic residues: residues 668–680 (DVGR…KPSL) and 803–823 (DEEK…EKPS). The segment covering 846–868 (FYRKQKPIPKSHPKHQEHHHHAK) has biased composition (basic residues). Residues 869-908 (ASVSTPVHSSSTSRNSSVAPTPQRTVSTSSSSSSAATSAR) show a composition bias toward low complexity. Over residues 941-951 (SFSSTSIQSSP) the composition is skewed to polar residues. Residues 958–971 (SSSSRTSSSSSTSS) are compositionally biased toward low complexity. A compositionally biased stretch (basic and acidic residues) spans 973–982 (KQEETADEKS). Low complexity predominate over residues 990–1007 (SSDESSTTGSTATSVVSS). The span at 1015 to 1047 (QQEKTDGEPPKKKSQTDFISERVSKIEGEERPL) shows a compositional bias: basic and acidic residues. Over residues 1179–1190 (EPPPTKRPAPPP) the composition is skewed to pro residues. Positions 1340–1345 (RLLQRR) match the RxxxRR motif motif. In terms of domain architecture, SET spans 1368-1485 (KMIKFARSRI…KGEEITYDYK (118 aa)). Position 1484 (tyrosine 1484) interacts with S-adenosyl-L-methionine. One can recognise a Post-SET domain in the interval 1491–1507 (DKIDCLCGAKTCRGYLN).

Belongs to the class V-like SAM-binding methyltransferase superfamily. As to quaternary structure, component of the Set1C/COMPASS complex (also known as the SET2 complex), which contains at least set-2, swd-2.1, cfp-1, rbbp-5, wdr-5.1, dpy-30 and ash-2. Expressed in all cells of embryo. In L1 larva, it is predominantly expressed in Z2 and Z3 primordial germ cells. In adults, it is predominantly expressed in the germline.

Its subcellular location is the nucleus. It carries out the reaction L-lysyl(4)-[histone H3] + 3 S-adenosyl-L-methionine = N(6),N(6),N(6)-trimethyl-L-lysyl(4)-[histone H3] + 3 S-adenosyl-L-homocysteine + 3 H(+). It catalyses the reaction N(6)-methyl-L-lysyl(4)-[histone H3] + S-adenosyl-L-methionine = N(6),N(6)-dimethyl-L-lysyl(4)-[histone H3] + S-adenosyl-L-homocysteine + H(+). The enzyme catalyses N(6),N(6)-dimethyl-L-lysyl(4)-[histone H3] + S-adenosyl-L-methionine = N(6),N(6),N(6)-trimethyl-L-lysyl(4)-[histone H3] + S-adenosyl-L-homocysteine + H(+). Functionally, catalytic component of the COMPASS (Set1C) complex that specifically mono-, di- and trimethylates histone H3 to form H3K4me1/2/3. Binds RNAs which might negatively affect its histone methyltransferase activity. COMPASS recognizes ubiquitinated H2B on one face of the nucleosome which stimulates the methylation of H3 on the opposing face. H3 'Lys-4' methylation represents a specific tag for epigenetic transcriptional activation. Implicated in the epigenetic inheritance of lifespan over several generations. Acts in the germline to limit the longevity of the soma, probably by regulating a lipid metabolism pathway that signals from the germline to the intestine, thereby preventing accumulation of mono-unsaturated fatty acids. Methylation in the germline is required for germline development and fertility, possibly by ensuring genome stability. May act redundantly with mes-3 and mes-4 proteins in the development of a fertile germline. Required for RNAi. Functions as an antagonist of hpl-1 and hpl-2 activity in growth and somatic gonad development. Cooperates with jmjd-3.1 and egl-27 to ensure robust transdifferentiation of the Y rectal cell to the PDA motor neuron during larval development. This Caenorhabditis elegans protein is Histone-lysine N-methyltransferase set-2 (set-2).